The chain runs to 202 residues: LexA repressor (202 aa).

Positions Arg-28–Lys-48 form a DNA-binding region, H-T-H motif. Residues Ser-119 and Lys-156 each act as for autocatalytic cleavage activity in the active site.

The protein belongs to the peptidase S24 family. Homodimer.

It carries out the reaction Hydrolysis of Ala-|-Gly bond in repressor LexA.. Functionally, represses a number of genes involved in the response to DNA damage (SOS response), including recA and lexA. Binds to the 16 bp palindromic sequence 5'-CTGTATATATATACAG-3'. In the presence of single-stranded DNA, RecA interacts with LexA causing an autocatalytic cleavage which disrupts the DNA-binding part of LexA, leading to derepression of the SOS regulon and eventually DNA repair. The polypeptide is LexA repressor (Pectobacterium carotovorum subsp. carotovorum (Erwinia carotovora subsp. carotovora)).